The following is a 53-amino-acid chain: UPF0391 membrane protein SG0393 (53 aa).

Transmembrane regions (helical) follow at residues 4-24 (WGII…GGLA) and 27-47 (AAWA…ISLF).

This sequence belongs to the UPF0391 family.

The protein localises to the cell membrane. This is UPF0391 membrane protein SG0393 from Sodalis glossinidius (strain morsitans).